Reading from the N-terminus, the 902-residue chain is AP-4 complex accessory subunit RUSC1 (902 aa).

4 disordered regions span residues 31–67, 81–155, 189–227, and 247–450; these read ELQE…SNSP, LENR…PGTC, QDVP…KTEP, and KTTE…AQAG. Positions 94 to 112 are enriched in low complexity; the sequence is AASPSDPGCSSSLSSCSDL. Over residues 249-261 the composition is skewed to low complexity; sequence TENNNTGWKNNGN. Polar residues predominate over residues 277–289; it reads WKTNTRITDSGSK. The span at 291-309 shows a compositional bias: basic and acidic residues; that stretch reads DAGKIDGGWRSDVSEEPVP. Pro residues-rich tracts occupy residues 381-390 and 398-407; these read PAPPVPPRDP and PPRPPPPPVP. The span at 433-450 shows a compositional bias: low complexity; it reads PAAGEEAPAAKEPGAQAG. Residues 470 to 605 are interaction with TRAF6; it reads MAEAQSGTGQ…FHAFILGLLN (136 aa). In terms of domain architecture, RUN spans 522 to 666; it reads DVGHLVLTTL…LTFHLDLLFE (145 aa). The interaction with IKBKG stretch occupies residues 606–672; sequence TKQLELWFSS…LLFEHHHHLP (67 aa). Disordered regions lie at residues 706–729 and 747–776; these read LRGT…PGSW and GFPL…TDEM. In terms of domain architecture, SH3 spans 844–902; it reads QTHRAVRALCDHTAARPDQLSFRRGEVLRVITTVDEDWLRCGRDGMEGLVPVGYTSLVL.

Associated component of the adapter-like complex 4 (AP-4). Interacts with IKBKG and TRAF6. Interacts with F-actin, acetylated actin, TUBB3, STX1A, KIF5B and KLC1. Phosphorylated on serine residues following nuclear translocation. In terms of processing, polyubiquitinated; polyubiquitination involves TRAF6. As to expression, predominantly expressed in brain.

The protein resides in the cytoplasm. It localises to the nucleus. The protein localises to the cytoskeleton. It is found in the cytoplasmic vesicle. Its subcellular location is the early endosome. The protein resides in the postsynaptic density. It localises to the golgi apparatus. Functionally, associates with the adapter-like complex 4 (AP-4) and may therefore play a role in vesicular trafficking of proteins at the trans-Golgi network. Signaling adapter which plays a role in neuronal differentiation. Involved in regulation of NGF-dependent neurite outgrowth. May play a role in neuronal vesicular trafficking, specifically involving pre-synaptic membrane proteins. Seems to be involved in signaling pathways that are regulated by the prolonged activation of MAPK. Can regulate the polyubiquitination of IKBKG and thus may be involved in regulation of the NF-kappa-B pathway. The polypeptide is AP-4 complex accessory subunit RUSC1 (Homo sapiens (Human)).